A 674-amino-acid chain; its full sequence is UvrABC system protein B (674 aa).

Positions 26–414 (EGLDSGLAHQ…SGNDIAEQVV (389 aa)) constitute a Helicase ATP-binding domain. ATP is bound at residue 39-46 (GVTGSGKT). The short motif at 92-115 (YYDYYQPEAYVPTTDTFIEKDASV) is the Beta-hairpin element. One can recognise a Helicase C-terminal domain in the interval 432–586 (QVDDLLSEIR…ALHNKKNGIT (155 aa)). Residues 634–669 (ELEIQRLETEMYDLAQNLEFEKAAEARDKIHTLRQQ) form the UVR domain.

It belongs to the UvrB family. As to quaternary structure, forms a heterotetramer with UvrA during the search for lesions. Interacts with UvrC in an incision complex.

It is found in the cytoplasm. Functionally, the UvrABC repair system catalyzes the recognition and processing of DNA lesions. A damage recognition complex composed of 2 UvrA and 2 UvrB subunits scans DNA for abnormalities. Upon binding of the UvrA(2)B(2) complex to a putative damaged site, the DNA wraps around one UvrB monomer. DNA wrap is dependent on ATP binding by UvrB and probably causes local melting of the DNA helix, facilitating insertion of UvrB beta-hairpin between the DNA strands. Then UvrB probes one DNA strand for the presence of a lesion. If a lesion is found the UvrA subunits dissociate and the UvrB-DNA preincision complex is formed. This complex is subsequently bound by UvrC and the second UvrB is released. If no lesion is found, the DNA wraps around the other UvrB subunit that will check the other stand for damage. The sequence is that of UvrABC system protein B from Photobacterium profundum (strain SS9).